Consider the following 134-residue polypeptide: MKVVHTVGKRRTAIARATAKEGSGKIRINKKPLELMEPKYIKMKLMEPVILAGEALSNIDVDIDVKGGGIVSQMDATRTALGKAIVEFTGKMDLKEKFLSYDRTLLVSDARRTEPHKPSKSSKGPRAKRQKSYR.

Residues 109-134 (DARRTEPHKPSKSSKGPRAKRQKSYR) are disordered. Residues 118–134 (PSKSSKGPRAKRQKSYR) show a composition bias toward basic residues.

It belongs to the universal ribosomal protein uS9 family.

In Methanococcus maripaludis (strain DSM 14266 / JCM 13030 / NBRC 101832 / S2 / LL), this protein is Small ribosomal subunit protein uS9.